The primary structure comprises 70 residues: DNA-directed RNA polymerase subunit omega (70 aa).

The protein belongs to the RNA polymerase subunit omega family. As to quaternary structure, the RNAP catalytic core consists of 2 alpha, 1 beta, 1 beta' and 1 omega subunit. When a sigma factor is associated with the core the holoenzyme is formed, which can initiate transcription.

It carries out the reaction RNA(n) + a ribonucleoside 5'-triphosphate = RNA(n+1) + diphosphate. In terms of biological role, promotes RNA polymerase assembly. Latches the N- and C-terminal regions of the beta' subunit thereby facilitating its interaction with the beta and alpha subunits. The sequence is that of DNA-directed RNA polymerase subunit omega from Bacillus anthracis.